Here is an 820-residue protein sequence, read N- to C-terminus: Phenylalanine--tRNA ligase beta subunit (820 aa).

The 113-residue stretch at 42-154 (KGGLEGLVIG…AEAVPGTLAK (113 aa)) folds into the tRNA-binding domain. Residues 413 to 489 (PQDFMVELSY…RIYGYNNVEI (77 aa)) enclose the B5 domain. Residues aspartate 467, aspartate 473, glutamate 476, and aspartate 477 each coordinate Mg(2+). The FDX-ACB domain maps to 727–820 (SKFPAVKRDL…LEDKLNAKLR (94 aa)).

Belongs to the phenylalanyl-tRNA synthetase beta subunit family. Type 1 subfamily. In terms of assembly, tetramer of two alpha and two beta subunits. Mg(2+) is required as a cofactor.

It localises to the cytoplasm. It carries out the reaction tRNA(Phe) + L-phenylalanine + ATP = L-phenylalanyl-tRNA(Phe) + AMP + diphosphate + H(+). This Bacteroides thetaiotaomicron (strain ATCC 29148 / DSM 2079 / JCM 5827 / CCUG 10774 / NCTC 10582 / VPI-5482 / E50) protein is Phenylalanine--tRNA ligase beta subunit.